A 70-amino-acid chain; its full sequence is Small ribosomal subunit protein eS17 (70 aa).

This sequence belongs to the eukaryotic ribosomal protein eS17 family.

This chain is Small ribosomal subunit protein eS17, found in Methanopyrus kandleri (strain AV19 / DSM 6324 / JCM 9639 / NBRC 100938).